The following is a 668-amino-acid chain: DNA ligase (668 aa).

NAD(+)-binding positions include 31–35 (DAEYD), 80–81 (SL), and glutamate 112. The active-site N6-AMP-lysine intermediate is lysine 114. NAD(+) is bound by residues arginine 135, glutamate 172, lysine 289, and lysine 313. 4 residues coordinate Zn(2+): cysteine 407, cysteine 410, cysteine 425, and cysteine 431. In terms of domain architecture, BRCT spans 591 to 668 (SVPQPLAGKV…NEEQLIELLN (78 aa)).

The protein belongs to the NAD-dependent DNA ligase family. LigA subfamily. Mg(2+) serves as cofactor. Requires Mn(2+) as cofactor.

The catalysed reaction is NAD(+) + (deoxyribonucleotide)n-3'-hydroxyl + 5'-phospho-(deoxyribonucleotide)m = (deoxyribonucleotide)n+m + AMP + beta-nicotinamide D-nucleotide.. In terms of biological role, DNA ligase that catalyzes the formation of phosphodiester linkages between 5'-phosphoryl and 3'-hydroxyl groups in double-stranded DNA using NAD as a coenzyme and as the energy source for the reaction. It is essential for DNA replication and repair of damaged DNA. The chain is DNA ligase from Aliivibrio fischeri (strain ATCC 700601 / ES114) (Vibrio fischeri).